The primary structure comprises 255 residues: Phosphoribosylaminoimidazole-succinocarboxamide synthase A (255 aa).

It belongs to the SAICAR synthetase family.

It carries out the reaction 5-amino-1-(5-phospho-D-ribosyl)imidazole-4-carboxylate + L-aspartate + ATP = (2S)-2-[5-amino-1-(5-phospho-beta-D-ribosyl)imidazole-4-carboxamido]succinate + ADP + phosphate + 2 H(+). It participates in purine metabolism; IMP biosynthesis via de novo pathway; 5-amino-1-(5-phospho-D-ribosyl)imidazole-4-carboxamide from 5-amino-1-(5-phospho-D-ribosyl)imidazole-4-carboxylate: step 1/2. This chain is Phosphoribosylaminoimidazole-succinocarboxamide synthase A (purC1), found in Bradyrhizobium diazoefficiens (strain JCM 10833 / BCRC 13528 / IAM 13628 / NBRC 14792 / USDA 110).